Reading from the N-terminus, the 196-residue chain is Glycerol-3-phosphate acyltransferase (196 aa).

The next 6 membrane-spanning stretches (helical) occupy residues 5–25 (VYLL…IIFC), 53–73 (FSAL…VLLA), 80–100 (PSEI…PLFF), 107–127 (GVAT…AAGL), 130–150 (WLIV…TALI), and 153–173 (FYIW…CCLL).

It belongs to the PlsY family. Probably interacts with PlsX.

The protein resides in the cell inner membrane. It catalyses the reaction an acyl phosphate + sn-glycerol 3-phosphate = a 1-acyl-sn-glycero-3-phosphate + phosphate. It participates in lipid metabolism; phospholipid metabolism. Its function is as follows. Catalyzes the transfer of an acyl group from acyl-phosphate (acyl-PO(4)) to glycerol-3-phosphate (G3P) to form lysophosphatidic acid (LPA). This enzyme utilizes acyl-phosphate as fatty acyl donor, but not acyl-CoA or acyl-ACP. This Actinobacillus pleuropneumoniae serotype 7 (strain AP76) protein is Glycerol-3-phosphate acyltransferase.